Here is a 298-residue protein sequence, read N- to C-terminus: Glutamyl-Q tRNA(Asp) synthetase (298 aa).

Residues 9–13 (RFAPS) and Glu-45 each bind L-glutamate. The short motif at 12–22 (PSPTGLLHAGS) is the 'HIGH' region element. Positions 101, 103, 121, and 125 each coordinate Zn(2+). Tyr-179 and Arg-197 together coordinate L-glutamate. Positions 235–239 (KLSKQ) match the 'KMSKS' region motif. Lys-238 serves as a coordination point for ATP.

The protein belongs to the class-I aminoacyl-tRNA synthetase family. GluQ subfamily. Zn(2+) serves as cofactor.

In terms of biological role, catalyzes the tRNA-independent activation of glutamate in presence of ATP and the subsequent transfer of glutamate onto a tRNA(Asp). Glutamate is transferred on the 2-amino-5-(4,5-dihydroxy-2-cyclopenten-1-yl) moiety of the queuosine in the wobble position of the QUC anticodon. The polypeptide is Glutamyl-Q tRNA(Asp) synthetase (Chromobacterium violaceum (strain ATCC 12472 / DSM 30191 / JCM 1249 / CCUG 213 / NBRC 12614 / NCIMB 9131 / NCTC 9757 / MK)).